Reading from the N-terminus, the 212-residue chain is Pyridoxine/pyridoxamine 5'-phosphate oxidase (212 aa).

Residues 8–11 (RREY) and Lys-66 contribute to the substrate site. FMN is bound by residues 61–66 (RIVLLK), 76–77 (FT), Arg-82, Lys-83, and Gln-105. Tyr-123, Arg-127, and Ser-131 together coordinate substrate. FMN contacts are provided by residues 140–141 (QS) and Trp-185. Residue 191–193 (RLH) participates in substrate binding. Arg-195 lines the FMN pocket.

Belongs to the pyridoxamine 5'-phosphate oxidase family. Homodimer. FMN is required as a cofactor.

The enzyme catalyses pyridoxamine 5'-phosphate + O2 + H2O = pyridoxal 5'-phosphate + H2O2 + NH4(+). It catalyses the reaction pyridoxine 5'-phosphate + O2 = pyridoxal 5'-phosphate + H2O2. Its pathway is cofactor metabolism; pyridoxal 5'-phosphate salvage; pyridoxal 5'-phosphate from pyridoxamine 5'-phosphate: step 1/1. It participates in cofactor metabolism; pyridoxal 5'-phosphate salvage; pyridoxal 5'-phosphate from pyridoxine 5'-phosphate: step 1/1. Functionally, catalyzes the oxidation of either pyridoxine 5'-phosphate (PNP) or pyridoxamine 5'-phosphate (PMP) into pyridoxal 5'-phosphate (PLP). This is Pyridoxine/pyridoxamine 5'-phosphate oxidase from Shewanella baltica (strain OS223).